The following is a 175-amino-acid chain: Disulfide bond formation protein B (175 aa).

The Cytoplasmic segment spans residues Met1–Val13. The chain crosses the membrane as a helical span at residues Leu14–Tyr30. Residues Leu31–Tyr48 are Periplasmic-facing. The cysteines at positions 40 and 43 are disulfide-linked. A helical membrane pass occupies residues Ala49–Gly65. The Cytoplasmic segment spans residues Arg66–Met70. A helical membrane pass occupies residues Thr71–Ala88. The Periplasmic portion of the chain corresponds to Arg89 to Asn144. Cys103 and Cys130 are oxidised to a cystine. A helical transmembrane segment spans residues Trp145–Arg163. At Ala164–Ala175 the chain is on the cytoplasmic side.

This sequence belongs to the DsbB family.

The protein resides in the cell inner membrane. Required for disulfide bond formation in some periplasmic proteins. Acts by oxidizing the DsbA protein. The chain is Disulfide bond formation protein B from Paracidovorax citrulli (strain AAC00-1) (Acidovorax citrulli).